The following is a 196-amino-acid chain: Large ribosomal subunit protein bL9c (196 aa).

The N-terminal 41 residues, 1–41 (MASTTSTLSLSWSNSFHSFAGAISEPQKSPENCRVMLPIVA), are a transit peptide targeting the chloroplast.

In terms of assembly, component of the chloroplast large ribosomal subunit (LSU). Mature 70S chloroplast ribosomes of higher plants consist of a small (30S) and a large (50S) subunit. The 30S small subunit contains 1 molecule of ribosomal RNA (16S rRNA) and 24 different proteins. The 50S large subunit contains 3 rRNA molecules (23S, 5S and 4.5S rRNA) and 33 different proteins.

The protein resides in the plastid. It localises to the chloroplast. Component of the chloroplast ribosome (chloro-ribosome), a dedicated translation machinery responsible for the synthesis of chloroplast genome-encoded proteins, including proteins of the transcription and translation machinery and components of the photosynthetic apparatus. The sequence is that of Large ribosomal subunit protein bL9c (RPL9) from Spinacia oleracea (Spinach).